Reading from the N-terminus, the 359-residue chain is Fructose-bisphosphate aldolase (359 aa).

Ser-50 contributes to the D-glyceraldehyde 3-phosphate binding site. Asp-83 acts as the Proton donor in catalysis. 4 residues coordinate Zn(2+): His-84, Asp-105, Glu-142, and His-198. Residue Gly-199 coordinates dihydroxyacetone phosphate. Position 232 (His-232) interacts with Zn(2+). Residues 233–235 (GSS) and 275–278 (NIDT) each bind dihydroxyacetone phosphate.

The protein belongs to the class II fructose-bisphosphate aldolase family. In terms of assembly, homodimer. It depends on Zn(2+) as a cofactor.

It carries out the reaction beta-D-fructose 1,6-bisphosphate = D-glyceraldehyde 3-phosphate + dihydroxyacetone phosphate. The protein operates within carbohydrate biosynthesis; Calvin cycle. It participates in carbohydrate degradation; glycolysis; D-glyceraldehyde 3-phosphate and glycerone phosphate from D-glucose: step 4/4. Catalyzes the aldol condensation of dihydroxyacetone phosphate (DHAP or glycerone-phosphate) with glyceraldehyde 3-phosphate (G3P) to form fructose 1,6-bisphosphate (FBP) in gluconeogenesis and the reverse reaction in glycolysis. The sequence is that of Fructose-bisphosphate aldolase (cbbA) from Rhizobium meliloti (strain 1021) (Ensifer meliloti).